Reading from the N-terminus, the 86-residue chain is U15-lycotoxin-Ls1d (86 aa).

An N-terminal signal peptide occupies residues 1-20 (MNSKIFAVLFLLAFLSCVLS). Residues 21–66 (DQYCPKSSITACKKMNIRNDCCKDDDCTGGSWCCATPCGNFCKYPT) enclose the WAP domain. 5 disulfides stabilise this stretch: cysteine 24-cysteine 54, cysteine 32-cysteine 58, cysteine 41-cysteine 53, cysteine 42-cysteine 80, and cysteine 47-cysteine 62.

This sequence belongs to the venom protein 11 family. 01 (wap-1) subfamily. In terms of processing, contains 5 disulfide bonds. In terms of tissue distribution, expressed by the venom gland.

The protein localises to the secreted. Its function is as follows. Has antibacterial activity. This is U15-lycotoxin-Ls1d from Lycosa singoriensis (Wolf spider).